The chain runs to 324 residues: tRNA U34 carboxymethyltransferase (324 aa).

Residues Lys91, Trp105, Lys110, Gly130, 152 to 154, 181 to 182, Met196, Tyr200, and Arg315 contribute to the carboxy-S-adenosyl-L-methionine site; these read DPS and IE.

It belongs to the class I-like SAM-binding methyltransferase superfamily. CmoB family. As to quaternary structure, homotetramer.

The enzyme catalyses carboxy-S-adenosyl-L-methionine + 5-hydroxyuridine(34) in tRNA = 5-carboxymethoxyuridine(34) in tRNA + S-adenosyl-L-homocysteine + H(+). Its function is as follows. Catalyzes carboxymethyl transfer from carboxy-S-adenosyl-L-methionine (Cx-SAM) to 5-hydroxyuridine (ho5U) to form 5-carboxymethoxyuridine (cmo5U) at position 34 in tRNAs. In Aliivibrio salmonicida (strain LFI1238) (Vibrio salmonicida (strain LFI1238)), this protein is tRNA U34 carboxymethyltransferase.